The sequence spans 278 residues: 3-methyl-2-oxobutanoate hydroxymethyltransferase (278 aa).

The Mg(2+) site is built by Asp43 and Asp82. Residues 43-44 (DS), Asp82, and Lys112 each bind 3-methyl-2-oxobutanoate. Glu114 lines the Mg(2+) pocket. The Proton acceptor role is filled by Glu181.

It belongs to the PanB family. In terms of assembly, homodecamer; pentamer of dimers. Mg(2+) is required as a cofactor.

Its subcellular location is the cytoplasm. It carries out the reaction 3-methyl-2-oxobutanoate + (6R)-5,10-methylene-5,6,7,8-tetrahydrofolate + H2O = 2-dehydropantoate + (6S)-5,6,7,8-tetrahydrofolate. It participates in cofactor biosynthesis; (R)-pantothenate biosynthesis; (R)-pantoate from 3-methyl-2-oxobutanoate: step 1/2. Catalyzes the reversible reaction in which hydroxymethyl group from 5,10-methylenetetrahydrofolate is transferred onto alpha-ketoisovalerate to form ketopantoate. This is 3-methyl-2-oxobutanoate hydroxymethyltransferase from Bacillus cereus (strain G9842).